A 455-amino-acid polypeptide reads, in one-letter code: DNA repair protein RadA (455 aa).

Residues 11 to 28 form a C4-type zinc finger; it reads CVGCGYVHPKWLGRCPEC. Position 97–104 (97–104) interacts with ATP; it reads GEPGIGKS. A RadA KNRFG motif motif is present at residues 250–254; sequence KNRFG. The interval 350 to 455 is lon-protease-like; sequence DIYVNVAGGI…IAEIFSKAKA (106 aa).

The protein belongs to the RecA family. RadA subfamily.

Its function is as follows. DNA-dependent ATPase involved in processing of recombination intermediates, plays a role in repairing DNA breaks. Stimulates the branch migration of RecA-mediated strand transfer reactions, allowing the 3' invading strand to extend heteroduplex DNA faster. Binds ssDNA in the presence of ADP but not other nucleotides, has ATPase activity that is stimulated by ssDNA and various branched DNA structures, but inhibited by SSB. Does not have RecA's homology-searching function. This is DNA repair protein RadA from Treponema pallidum (strain Nichols).